A 144-amino-acid chain; its full sequence is Large ribosomal subunit protein uL13 (144 aa).

The protein belongs to the universal ribosomal protein uL13 family. Part of the 50S ribosomal subunit.

Functionally, this protein is one of the early assembly proteins of the 50S ribosomal subunit, although it is not seen to bind rRNA by itself. It is important during the early stages of 50S assembly. In Clostridium novyi (strain NT), this protein is Large ribosomal subunit protein uL13.